The following is a 326-amino-acid chain: Ras association domain-containing protein 2 (326 aa).

Residues 111-133 are disordered; the sequence is EVDAPPEGDQMPSSTDSRGLKPL. In terms of domain architecture, Ras-associating spans 176-264; that stretch reads YNHKTSVFTP…SKVFLMEKDQ (89 aa). The SARAH domain occupies 272–319; the sequence is VAQYIKFEMPVLKSFIQKLQEEEDREVKKLMRKYTVLRLMIRQRLEEI.

Interacts directly with activated KRAS in a GTP-dependent manner. Interacts (via SARAH domain) with STK3/MST2 and STK4/MST1. Phosphorylated by STK3/MST2 and STK4/MST1. In terms of tissue distribution, widely expressed with highest levels in brain, placenta, peripheral blood and lung. Frequently down-regulated in lung tumor cell lines.

The protein localises to the nucleus. It localises to the cytoplasm. It is found in the chromosome. The protein resides in the centromere. Its subcellular location is the kinetochore. Potential tumor suppressor. Acts as a KRAS-specific effector protein. May promote apoptosis and cell cycle arrest. Stabilizes STK3/MST2 by protecting it from proteasomal degradation. The sequence is that of Ras association domain-containing protein 2 (RASSF2) from Homo sapiens (Human).